The primary structure comprises 38 residues: Large ribosomal subunit protein bL36 (38 aa).

This sequence belongs to the bacterial ribosomal protein bL36 family.

This is Large ribosomal subunit protein bL36 from Pseudothermotoga lettingae (strain ATCC BAA-301 / DSM 14385 / NBRC 107922 / TMO) (Thermotoga lettingae).